The following is a 103-amino-acid chain: UPF0473 protein LCA_0390 (103 aa).

It belongs to the UPF0473 family.

This is UPF0473 protein LCA_0390 from Latilactobacillus sakei subsp. sakei (strain 23K) (Lactobacillus sakei subsp. sakei).